Consider the following 459-residue polypeptide: Vicilin (459 aa).

A signal peptide spans 1–28 (MAATTMKASFPLLMLMGISFLASVCVSS). Positions 36-194 (FIFKSNKFQT…SFNTDYEEIE (159 aa)) constitute a Cupin type-1 1 domain. Disordered regions lie at residues 235 to 258 (LSKN…NLRS), 321 to 346 (ELVG…QGEE), and 430 to 459 (ENQK…LSSV). The span at 238–251 (NAKSTSKKSVSSES) shows a compositional bias: low complexity. The Cupin type-1 2 domain occupies 254–426 (FNLRSRGPIY…AFPGSAQEVD (173 aa)). Residues 337-346 (DDEEEEQGEE) show a composition bias toward acidic residues. Over residues 444–459 (QRERGSRETRDRLSSV) the composition is skewed to basic and acidic residues.

The protein belongs to the 7S seed storage protein family.

It is found in the vacuole. Its subcellular location is the aleurone grain. Functionally, seed storage protein. The chain is Vicilin from Pisum sativum (Garden pea).